The sequence spans 374 residues: Coiled-coil domain-containing protein 89 (374 aa).

A disordered region spans residues 1 to 38 (MRAPMPQKEQAPRMDTSPPEERLEKQNEKLNNQEEEME). Threonine 16 carries the phosphothreonine modification. The segment covering 19–32 (PEERLEKQNEKLNN) has biased composition (basic and acidic residues). Positions 19–350 (PEERLEKQNE…YDELRLQSEA (332 aa)) form a coiled coil.

It belongs to the CCDC89 family. As to quaternary structure, interacts with HEY1.

The protein localises to the cytoplasm. It is found in the nucleus. This Macaca fascicularis (Crab-eating macaque) protein is Coiled-coil domain-containing protein 89 (CCDC89).